We begin with the raw amino-acid sequence, 638 residues long: MPIITLPDGTKKEFSGSITIADIASDIGPGLASAAIAGKVNQDLVDISIPIDYDAEIKIITAKDKEGVEIIRHSFAHLIGHAVKQLYPDAKMAIGPIIEDGFYYDISYSKTFTPEDLARIEERIKDLIKLNYDVVVEIVSRDKALNTFKDRNEPYKVEIINNIPEGETIKLYKHQEYIDMCRGPHVPNTKHLNSFKLMRVSGAYWRGDSDNEMLQRIYGTAWANKKDLKAYINRLEEAEKRDHRKIGKKMDLFHTQEEAPGMVFWHPNGWSIYQVLEKYIRDVLNNNYYQEVKTPQAVDRSLWEKSGHWDKFKDDMFTTTSENREYAIKPMNCPCHIQIFNQGLKSYRDLPIRLAEFGSCHRNEPSGALHGLMRVRNFVQDDAHIFCTEAQVQSEVSNFIDLVFEVYKSFGFNEIIIKLSTRPKKRVGSEFIWDKSEKALSEALNSKGLDWSYLPGEGAFYGPKIEFSLKDCLNRVWQCGTIQVDFSMPSRLEAKYIDEKGEKKEPVMLHRAILGSFERFIGILIENYAGNFPVWLAPVQIIVMGITDRNSSCCESLTTKLINKGYRVKLDLRNEKIGFKIREHTLNRIPYLLIIGDKEEKEGKIAVRTREGNDMGSISLEEFLVILNKSISLKGRFD.

A TGS domain is found at Met-1 to Thr-61. The interval Asp-242–Pro-533 is catalytic. 3 residues coordinate Zn(2+): Cys-333, His-384, and His-510.

It belongs to the class-II aminoacyl-tRNA synthetase family. In terms of assembly, homodimer. Zn(2+) serves as cofactor.

The protein localises to the cytoplasm. It catalyses the reaction tRNA(Thr) + L-threonine + ATP = L-threonyl-tRNA(Thr) + AMP + diphosphate + H(+). Functionally, catalyzes the attachment of threonine to tRNA(Thr) in a two-step reaction: L-threonine is first activated by ATP to form Thr-AMP and then transferred to the acceptor end of tRNA(Thr). Also edits incorrectly charged L-seryl-tRNA(Thr). This is Threonine--tRNA ligase from Prochlorococcus marinus (strain MIT 9211).